Consider the following 320-residue polypeptide: Malate dehydrogenase (320 aa).

NAD(+)-binding positions include 10-15 (GSGMIG) and D34. The substrate site is built by R83 and R89. NAD(+) is bound by residues N96 and 119-121 (ITN). The substrate site is built by N121 and R152. H176 serves as the catalytic Proton acceptor.

This sequence belongs to the LDH/MDH superfamily. MDH type 3 family.

It carries out the reaction (S)-malate + NAD(+) = oxaloacetate + NADH + H(+). Catalyzes the reversible oxidation of malate to oxaloacetate. This Brucella anthropi (strain ATCC 49188 / DSM 6882 / CCUG 24695 / JCM 21032 / LMG 3331 / NBRC 15819 / NCTC 12168 / Alc 37) (Ochrobactrum anthropi) protein is Malate dehydrogenase.